We begin with the raw amino-acid sequence, 1141 residues long: Isoleucine--tRNA ligase (1141 aa).

A 'HIGH' region motif is present at residues 50 to 60; it reads PSANGMPGIHH. Residues 689-693 carry the 'KMSKS' region motif; that stretch reads KMSKR. Lysine 692 serves as a coordination point for ATP.

The protein belongs to the class-I aminoacyl-tRNA synthetase family. IleS type 2 subfamily. As to quaternary structure, monomer. Zn(2+) serves as cofactor.

Its subcellular location is the cytoplasm. It catalyses the reaction tRNA(Ile) + L-isoleucine + ATP = L-isoleucyl-tRNA(Ile) + AMP + diphosphate. Catalyzes the attachment of isoleucine to tRNA(Ile). As IleRS can inadvertently accommodate and process structurally similar amino acids such as valine, to avoid such errors it has two additional distinct tRNA(Ile)-dependent editing activities. One activity is designated as 'pretransfer' editing and involves the hydrolysis of activated Val-AMP. The other activity is designated 'posttransfer' editing and involves deacylation of mischarged Val-tRNA(Ile). The protein is Isoleucine--tRNA ligase of Bacteroides fragilis (strain ATCC 25285 / DSM 2151 / CCUG 4856 / JCM 11019 / LMG 10263 / NCTC 9343 / Onslow / VPI 2553 / EN-2).